The chain runs to 287 residues: Large ribosomal subunit protein uL2 (287 aa).

The tract at residues 216 to 287 (RRPEVRGSVM…SKRGRGGRDA (72 aa)) is disordered. The segment covering 271-287 (QRRRRKSSKRGRGGRDA) has biased composition (basic residues).

This sequence belongs to the universal ribosomal protein uL2 family. In terms of assembly, part of the 50S ribosomal subunit. Forms a bridge to the 30S subunit in the 70S ribosome.

In terms of biological role, one of the primary rRNA binding proteins. Required for association of the 30S and 50S subunits to form the 70S ribosome, for tRNA binding and peptide bond formation. It has been suggested to have peptidyltransferase activity; this is somewhat controversial. Makes several contacts with the 16S rRNA in the 70S ribosome. This Synechococcus sp. (strain ATCC 27144 / PCC 6301 / SAUG 1402/1) (Anacystis nidulans) protein is Large ribosomal subunit protein uL2.